A 126-amino-acid chain; its full sequence is Small ribosomal subunit protein uS13 (126 aa).

Positions 94 to 126 (RNLPVHGQRTHTNARTRKGPRRAIAGKKKAGKK) are disordered.

Belongs to the universal ribosomal protein uS13 family. As to quaternary structure, part of the 30S ribosomal subunit. Forms a loose heterodimer with protein S19. Forms two bridges to the 50S subunit in the 70S ribosome.

Functionally, located at the top of the head of the 30S subunit, it contacts several helices of the 16S rRNA. In the 70S ribosome it contacts the 23S rRNA (bridge B1a) and protein L5 of the 50S subunit (bridge B1b), connecting the 2 subunits; these bridges are implicated in subunit movement. Contacts the tRNAs in the A and P-sites. This Parafrankia sp. (strain EAN1pec) protein is Small ribosomal subunit protein uS13.